Consider the following 218-residue polypeptide: Ribosomal RNA small subunit methyltransferase J (218 aa).

S-adenosyl-L-methionine contacts are provided by residues arginine 55–aspartate 56, glutamate 71–arginine 72, and aspartate 123.

It belongs to the methyltransferase superfamily. RsmJ family.

Its subcellular location is the cytoplasm. It carries out the reaction guanosine(1516) in 16S rRNA + S-adenosyl-L-methionine = N(2)-methylguanosine(1516) in 16S rRNA + S-adenosyl-L-homocysteine + H(+). Its function is as follows. Specifically methylates the guanosine in position 1516 of 16S rRNA. This chain is Ribosomal RNA small subunit methyltransferase J, found in Rhodopseudomonas palustris (strain HaA2).